Reading from the N-terminus, the 545-residue chain is CTP synthase (545 aa).

Residues 1–266 (MTTRYIFVTG…DELVTKRFGI (266 aa)) form an amidoligase domain region. Ser14 provides a ligand contact to CTP. Residue Ser14 participates in UTP binding. Residues 15 to 20 (SLGKGI) and Asp72 each bind ATP. Mg(2+) contacts are provided by Asp72 and Glu140. CTP contacts are provided by residues 147-149 (DIE), 187-192 (KTKPTQ), and Lys223. UTP contacts are provided by residues 187-192 (KTKPTQ) and Lys223. 239-241 (KDV) contacts ATP. The Glutamine amidotransferase type-1 domain occupies 291–542 (TIGMVGKYIE…VAAAAAHQKR (252 aa)). An L-glutamine-binding site is contributed by Gly352. The active-site Nucleophile; for glutamine hydrolysis is Cys379. L-glutamine contacts are provided by residues 380–383 (LGMQ), Glu403, and Arg470. Residues His515 and Glu517 contribute to the active site.

This sequence belongs to the CTP synthase family. Homotetramer.

It carries out the reaction UTP + L-glutamine + ATP + H2O = CTP + L-glutamate + ADP + phosphate + 2 H(+). The catalysed reaction is L-glutamine + H2O = L-glutamate + NH4(+). It catalyses the reaction UTP + NH4(+) + ATP = CTP + ADP + phosphate + 2 H(+). The protein operates within pyrimidine metabolism; CTP biosynthesis via de novo pathway; CTP from UDP: step 2/2. Allosterically activated by GTP, when glutamine is the substrate; GTP has no effect on the reaction when ammonia is the substrate. The allosteric effector GTP functions by stabilizing the protein conformation that binds the tetrahedral intermediate(s) formed during glutamine hydrolysis. Inhibited by the product CTP, via allosteric rather than competitive inhibition. Its function is as follows. Catalyzes the ATP-dependent amination of UTP to CTP with either L-glutamine or ammonia as the source of nitrogen. Regulates intracellular CTP levels through interactions with the four ribonucleotide triphosphates. This Shewanella woodyi (strain ATCC 51908 / MS32) protein is CTP synthase.